The following is a 152-amino-acid chain: UPF0178 protein Plav_1521 (152 aa).

Positions 114 to 152 (LRETGQSKGGGPAFSKEDRSRFLRSLEDTVQAIRRRPPP) are disordered. Residues 128–140 (SKEDRSRFLRSLE) are compositionally biased toward basic and acidic residues.

The protein belongs to the UPF0178 family.

The chain is UPF0178 protein Plav_1521 from Parvibaculum lavamentivorans (strain DS-1 / DSM 13023 / NCIMB 13966).